The following is a 212-amino-acid chain: 7-carboxy-7-deazaguanine synthase (212 aa).

Substrate contacts are provided by residues 22–24 (LQG) and Arg37. One can recognise a Radical SAM core domain in the interval 28-212 (NTGMPAVFVR…VQTHKWAGIE (185 aa)). The [4Fe-4S] cluster site is built by Cys41, Cys45, and Cys48. Thr50 is a binding site for Mg(2+). Thr78 serves as a coordination point for substrate. S-adenosyl-L-methionine-binding positions include Gly80 and 122–124 (SPK).

This sequence belongs to the radical SAM superfamily. 7-carboxy-7-deazaguanine synthase family. In terms of assembly, homodimer. [4Fe-4S] cluster serves as cofactor. Requires S-adenosyl-L-methionine as cofactor. Mg(2+) is required as a cofactor.

The catalysed reaction is 6-carboxy-5,6,7,8-tetrahydropterin + H(+) = 7-carboxy-7-deazaguanine + NH4(+). It participates in purine metabolism; 7-cyano-7-deazaguanine biosynthesis. Functionally, catalyzes the complex heterocyclic radical-mediated conversion of 6-carboxy-5,6,7,8-tetrahydropterin (CPH4) to 7-carboxy-7-deazaguanine (CDG), a step common to the biosynthetic pathways of all 7-deazapurine-containing compounds. The chain is 7-carboxy-7-deazaguanine synthase from Neisseria meningitidis serogroup B (strain ATCC BAA-335 / MC58).